The sequence spans 100 residues: ATP-dependent Clp protease adapter protein ClpS (100 aa).

The protein belongs to the ClpS family. In terms of assembly, binds to the N-terminal domain of the chaperone ClpA.

Functionally, involved in the modulation of the specificity of the ClpAP-mediated ATP-dependent protein degradation. This chain is ATP-dependent Clp protease adapter protein ClpS, found in Neisseria meningitidis serogroup B (strain ATCC BAA-335 / MC58).